A 298-amino-acid chain; its full sequence is Acetylglutamate kinase (298 aa).

Residues 68 to 69 (GG), arginine 90, and asparagine 195 contribute to the substrate site.

The protein belongs to the acetylglutamate kinase family. ArgB subfamily.

It is found in the cytoplasm. It catalyses the reaction N-acetyl-L-glutamate + ATP = N-acetyl-L-glutamyl 5-phosphate + ADP. It functions in the pathway amino-acid biosynthesis; L-arginine biosynthesis; N(2)-acetyl-L-ornithine from L-glutamate: step 2/4. In terms of biological role, catalyzes the ATP-dependent phosphorylation of N-acetyl-L-glutamate. The chain is Acetylglutamate kinase from Hydrogenovibrio crunogenus (strain DSM 25203 / XCL-2) (Thiomicrospira crunogena).